The following is a 76-amino-acid chain: Exodeoxyribonuclease 7 small subunit (76 aa).

This sequence belongs to the XseB family. In terms of assembly, heterooligomer composed of large and small subunits.

The protein localises to the cytoplasm. The enzyme catalyses Exonucleolytic cleavage in either 5'- to 3'- or 3'- to 5'-direction to yield nucleoside 5'-phosphates.. Functionally, bidirectionally degrades single-stranded DNA into large acid-insoluble oligonucleotides, which are then degraded further into small acid-soluble oligonucleotides. This Bacillus cereus (strain G9842) protein is Exodeoxyribonuclease 7 small subunit.